A 58-amino-acid polypeptide reads, in one-letter code: uncharacterized protein (58 aa).

Residues 12–32 form a helical membrane-spanning segment; that stretch reads VMTLLITISILIVLAVLLVTI.

It is found in the cell membrane. This is an uncharacterized protein from Bacillus subtilis (strain 168).